A 289-amino-acid polypeptide reads, in one-letter code: Rhodopsin (289 aa).

At 1-7 (YLVNPAA) the chain is on the extracellular side. A helical transmembrane segment spans residues 8–32 (YAALGAYMFLLILIGFPVNFLTLYV). Topologically, residues 33 to 44 (TIEHKKLRTPLN) are cytoplasmic. A helical transmembrane segment spans residues 45-67 (YILLNLAVANLFMVLGGFTTTMY). Topologically, residues 68-81 (TSMHGYFVLGRLGC) are extracellular. An intrachain disulfide couples Cys81 to Cys158. The chain crosses the membrane as a helical span at residues 82–104 (NLEGFFATMGGEIALWSLVVLAI). The short motif at 105 to 107 (ERW) is the 'Ionic lock' involved in activated form stabilization element. Over 105–123 (ERWIVVCKPISNFRFTEDH) the chain is Cytoplasmic. Residues 124–144 (AIMGLAFTWVMALSCAVPPLV) form a helical membrane-spanning segment. At 145 to 173 (GWSRYIPEGMQCSCGVDYYTRAEGFNNES) the chain is on the extracellular side. Asn171 carries N-linked (GlcNAc...) asparagine glycosylation. Residues 174-195 (FVIYMFIVHFLTPLIIISFCYG) traverse the membrane as a helical segment. Residues 196–223 (RLLCAVKEAAAAQQESETTQRAEREVSR) lie on the Cytoplasmic side of the membrane. Residues 224–245 (MVVMMVISFLMCWLPYASVAWY) form a helical membrane-spanning segment. Topologically, residues 246-257 (IFCNQGSEFGPI) are extracellular. The chain crosses the membrane as a helical span at residues 258 to 279 (FMTLPAFFAKSSAIYNPLIYIC). Lys267 carries the N6-(retinylidene)lysine modification. The Cytoplasmic portion of the chain corresponds to 280–289 (MNKQFRHCMI).

This sequence belongs to the G-protein coupled receptor 1 family. Opsin subfamily. Phosphorylated on some or all of the serine and threonine residues present in the C-terminal region. Post-translationally, contains one covalently linked retinal chromophore.

The protein resides in the membrane. Its subcellular location is the cell projection. It is found in the cilium. It localises to the photoreceptor outer segment. Photoreceptor required for image-forming vision at low light intensity. While most salt water fish species use retinal as chromophore, most freshwater fish use 3-dehydroretinal, or a mixture of retinal and 3-dehydroretinal. Light-induced isomerization of 11-cis to all-trans retinal triggers a conformational change that activates signaling via G-proteins. Subsequent receptor phosphorylation mediates displacement of the bound G-protein alpha subunit by arrestin and terminates signaling. In Cottocomephorus inermis (Longfin Baikal sculpin), this protein is Rhodopsin (rho).